The chain runs to 327 residues: MTISILGAGAWGTAIANSLSGKQNVILWTHNKTTFESISRTRESDKLLGCQIPENVSVKLAIKETVNASAMIFAVPTQSLRKVCQQLHDCNLKKDVAIILACKGIEKSTLKLPSEIVNEVLPNNPVAIFSGPSFAIEVAKKLPYSMVLACQDDTLGSKLISELQQENIKLHFSSDVVGVQICAALKNVFAIACGIVLGKKLGFNAHAALVTKSMNEVKTLYLAKTDSVSIDIDTLLGPACLGDLIMTCTSLNSRNLSFGFKIGSSNNSFDAQQTLSEGKSVIEGFSTAQSAFNLAEKLKIKMPICEAVYRLLYESASIEDTISVFVG.

Residues tryptophan 11, histidine 30, and lysine 103 each contribute to the NADPH site. Sn-glycerol 3-phosphate is bound by residues lysine 103, glycine 131, and serine 133. Alanine 135 is a binding site for NADPH. Positions 186, 243, 253, 254, and 255 each coordinate sn-glycerol 3-phosphate. Residue lysine 186 is the Proton acceptor of the active site. Arginine 254 lines the NADPH pocket. NADPH-binding residues include valine 281 and glutamate 283.

Belongs to the NAD-dependent glycerol-3-phosphate dehydrogenase family.

The protein resides in the cytoplasm. The enzyme catalyses sn-glycerol 3-phosphate + NAD(+) = dihydroxyacetone phosphate + NADH + H(+). It carries out the reaction sn-glycerol 3-phosphate + NADP(+) = dihydroxyacetone phosphate + NADPH + H(+). The protein operates within membrane lipid metabolism; glycerophospholipid metabolism. Functionally, catalyzes the reduction of the glycolytic intermediate dihydroxyacetone phosphate (DHAP) to sn-glycerol 3-phosphate (G3P), the key precursor for phospholipid synthesis. This is Glycerol-3-phosphate dehydrogenase [NAD(P)+] from Wolbachia sp. subsp. Brugia malayi (strain TRS).